The sequence spans 381 residues: Creatine kinase M-type (381 aa).

One can recognise a Phosphagen kinase N-terminal domain in the interval 11 to 98; sequence KLNYKPQEEY…FDPIIQDRHG (88 aa). Residues 125–367 enclose the Phosphagen kinase C-terminal domain; that stretch reads YVLSSRVRTG…KLMVEMEKKL (243 aa). Residue 128–132 participates in ATP binding; sequence SSRVR. S164 is subject to Phosphoserine. The residue at position 166 (T166) is a Phosphothreonine. At S178 the chain carries Phosphoserine. Residue T180 is modified to Phosphothreonine. H191 provides a ligand contact to ATP. Position 199 is a phosphoserine (S199). ATP is bound by residues R236 and R292. A phosphothreonine mark is found at T313 and T322. ATP is bound by residues 320–325 and D335; that span reads RGTGGV. A Phosphoserine modification is found at S372.

This sequence belongs to the ATP:guanido phosphotransferase family. As to quaternary structure, dimer of identical or non-identical chains, which can be either B (brain type) or M (muscle type). With MM being the major form in skeletal muscle and myocardium, MB existing in myocardium, and BB existing in many tissues, especially brain.

It is found in the cytoplasm. It carries out the reaction creatine + ATP = N-phosphocreatine + ADP + H(+). Its function is as follows. Reversibly catalyzes the transfer of phosphate between ATP and various phosphogens (e.g. creatine phosphate). Creatine kinase isoenzymes play a central role in energy transduction in tissues with large, fluctuating energy demands, such as skeletal muscle, heart, brain and spermatozoa. The polypeptide is Creatine kinase M-type (Ckm) (Mus musculus (Mouse)).